The primary structure comprises 242 residues: MAIMASRKHLKRFKSPVHWPIHPKEYKWTVKPSPGPHAIENSLPLMIIVRDILKVADNAREARKIINSGEVLVDGRPRKNYKFPVGFMDVVSIPRTGDVYRVLPDERGRLVLHPIDEENAGFKLCKIVNKTTIKGGRTQLNLHDGRNYLSDDEFRVGDVVKLSIPEQEILERIPFEKDSLGLVTGGRHTGEIGKIKKINITRSSMPNTAVIETGAGKTFLTLKDYVFVIGKDESVISLPGGK.

Positions leucine 43 to glutamate 106 constitute an S4 RNA-binding domain.

The protein belongs to the eukaryotic ribosomal protein eS4 family.

This Methanothermobacter thermautotrophicus (strain ATCC 29096 / DSM 1053 / JCM 10044 / NBRC 100330 / Delta H) (Methanobacterium thermoautotrophicum) protein is Small ribosomal subunit protein eS4 (rps4e).